Reading from the N-terminus, the 545-residue chain is Glucose-6-phosphate isomerase (545 aa).

Glutamate 351 serves as the catalytic Proton donor. Residues histidine 382 and lysine 510 contribute to the active site.

The protein belongs to the GPI family.

It is found in the cytoplasm. It catalyses the reaction alpha-D-glucose 6-phosphate = beta-D-fructose 6-phosphate. Its pathway is carbohydrate biosynthesis; gluconeogenesis. It participates in carbohydrate degradation; glycolysis; D-glyceraldehyde 3-phosphate and glycerone phosphate from D-glucose: step 2/4. Its function is as follows. Catalyzes the reversible isomerization of glucose-6-phosphate to fructose-6-phosphate. This chain is Glucose-6-phosphate isomerase, found in Shewanella sp. (strain ANA-3).